A 71-amino-acid polypeptide reads, in one-letter code: Large ribosomal subunit protein bL31 (71 aa).

The Zn(2+) site is built by Cys-16, Cys-18, Cys-37, and Cys-40.

It belongs to the bacterial ribosomal protein bL31 family. Type A subfamily. Part of the 50S ribosomal subunit. The cofactor is Zn(2+).

Binds the 23S rRNA. In Pseudomonas putida (strain W619), this protein is Large ribosomal subunit protein bL31.